Reading from the N-terminus, the 264-residue chain is Type 1 encapsulin shell protein (264 aa).

The protein belongs to the encapsulin family. Family 1 subfamily. In terms of assembly, forms hollow shells composed of 60 subunits. Monomers probably form pentamers which assemble into the shell. There are 12 pores where the pentamers meet as well as 3-fold axis channels and dimer channels; none are larger than 3-4 Angstroms in diameter. The N-terminus of the protein is inside the shell, the C-terminus is outside.

The protein localises to the encapsulin nanocompartment. Shell component of a type 1 encapsulin nanocompartment. Assembles into proteinaceous shells 21-24 nm in diameter. Empty organelles can be expressed in E.coli. Cargo proteins (DypB) are targeted to the interior via their C-terminal extensions. The chain is Type 1 encapsulin shell protein from Rhodococcus erythropolis (strain PR4 / NBRC 100887).